The primary structure comprises 396 residues: Probable circularly permuted 1,3-beta-glucanase YJL171C (396 aa).

Positions 1-19 are cleaved as a signal peptide; that stretch reads MLQSIVLSVCMFMLHTVAA. 7 N-linked (GlcNAc...) asparagine glycosylation sites follow: Asn51, Asn99, Asn122, Asn146, Asn174, Asn219, and Asn249. The ExDxxE motif motif lies at 259-264; sequence EYDIFE. 4 N-linked (GlcNAc...) asparagine glycosylation sites follow: Asn267, Asn300, Asn328, and Asn346. Asn368 carries the GPI-anchor amidated asparagine lipid modification. Residues 369–396 constitute a propeptide, removed in mature form; that stretch reads GVALTKMQNGVWYYILAIFTAFTQVVLI.

Belongs to the PGA52 family. Post-translationally, extensively N-glycosylated.

It is found in the cell membrane. It catalyses the reaction Hydrolysis of (1-&gt;3)-beta-D-glucosidic linkages in (1-&gt;3)-beta-D-glucans.. Its function is as follows. Probable circularly permuted 1,3-beta-glucanase involved in cell wall modification through beta-1,3-glucan network alterations such as increased branching or remodeling. This is Probable circularly permuted 1,3-beta-glucanase YJL171C (TOH1) from Saccharomyces cerevisiae (strain ATCC 204508 / S288c) (Baker's yeast).